Here is a 278-residue protein sequence, read N- to C-terminus: Formamidopyrimidine-DNA glycosylase (278 aa).

Pro-2 serves as the catalytic Schiff-base intermediate with DNA. The active-site Proton donor is the Glu-3. The Proton donor; for beta-elimination activity role is filled by Lys-57. 3 residues coordinate DNA: His-90, Arg-109, and Lys-150. An FPG-type zinc finger spans residues Gln-235–Phe-269. Arg-259 acts as the Proton donor; for delta-elimination activity in catalysis.

It belongs to the FPG family. Monomer. Zn(2+) is required as a cofactor.

The enzyme catalyses Hydrolysis of DNA containing ring-opened 7-methylguanine residues, releasing 2,6-diamino-4-hydroxy-5-(N-methyl)formamidopyrimidine.. The catalysed reaction is 2'-deoxyribonucleotide-(2'-deoxyribose 5'-phosphate)-2'-deoxyribonucleotide-DNA = a 3'-end 2'-deoxyribonucleotide-(2,3-dehydro-2,3-deoxyribose 5'-phosphate)-DNA + a 5'-end 5'-phospho-2'-deoxyribonucleoside-DNA + H(+). Involved in base excision repair of DNA damaged by oxidation or by mutagenic agents. Acts as a DNA glycosylase that recognizes and removes damaged bases. Has a preference for oxidized purines, such as 7,8-dihydro-8-oxoguanine (8-oxoG). Has AP (apurinic/apyrimidinic) lyase activity and introduces nicks in the DNA strand. Cleaves the DNA backbone by beta-delta elimination to generate a single-strand break at the site of the removed base with both 3'- and 5'-phosphates. The chain is Formamidopyrimidine-DNA glycosylase from Yersinia pestis (strain Pestoides F).